Here is a 215-residue protein sequence, read N- to C-terminus: Putative BTB/POZ domain-containing protein At2g05330 (215 aa).

The BTB domain occupies 17 to 87; it reads SWQKIGKLTY…LYSDGSMLSS (71 aa).

Its pathway is protein modification; protein ubiquitination. Functionally, may act as a substrate-specific adapter of an E3 ubiquitin-protein ligase complex (CUL3-RBX1-BTB) which mediates the ubiquitination and subsequent proteasomal degradation of target proteins. The sequence is that of Putative BTB/POZ domain-containing protein At2g05330 from Arabidopsis thaliana (Mouse-ear cress).